The sequence spans 249 residues: Exosome complex component Rrp41 (249 aa).

Belongs to the RNase PH family. Rrp41 subfamily. In terms of assembly, component of the archaeal exosome complex. Forms a hexameric ring-like arrangement composed of 3 Rrp41-Rrp42 heterodimers. The hexameric ring associates with a trimer of Rrp4 and/or Csl4 subunits.

It is found in the cytoplasm. Catalytic component of the exosome, which is a complex involved in RNA degradation. Has 3'-&gt;5' exoribonuclease activity. Can also synthesize heteromeric RNA-tails. The protein is Exosome complex component Rrp41 of Pyrococcus abyssi (strain GE5 / Orsay).